The sequence spans 205 residues: Large ribosomal subunit protein uL4 (205 aa).

The protein belongs to the universal ribosomal protein uL4 family. Part of the 50S ribosomal subunit.

Functionally, one of the primary rRNA binding proteins, this protein initially binds near the 5'-end of the 23S rRNA. It is important during the early stages of 50S assembly. It makes multiple contacts with different domains of the 23S rRNA in the assembled 50S subunit and ribosome. Forms part of the polypeptide exit tunnel. The chain is Large ribosomal subunit protein uL4 from Thermus thermophilus (strain ATCC BAA-163 / DSM 7039 / HB27).